The chain runs to 601 residues: Ubiquitin carboxyl-terminal hydrolase MINDY-2 (601 aa).

Residues 1–205 form a disordered region; that stretch reads MENSPDSPQP…LCKEEEEDPA (205 aa). Over residues 24 to 34 the composition is skewed to basic and acidic residues; that stretch reads EGRRRGGREAE. Residue Thr62 is modified to Phosphothreonine. Ser82 carries the phosphoserine modification. 3 stretches are compositionally biased toward low complexity: residues 127-141, 148-169, and 186-195; these read EEPS…SCSE, SPSL…SSEF, and GAAGPPRAAP. The active-site Nucleophile is Cys244. Residue His426 is the Proton acceptor of the active site. The interval 485–537 is ubiquitin-binding domain (UBD); the sequence is GQQDQIDQDYLMALSLQQEQQSQEINWEQIPEGISDLELAKKLQEEEDRRASQ. Positions 534-601 are disordered; the sequence is RASQYYQEQE…EKEKNSCVIL (68 aa). Low complexity predominate over residues 536–570; sequence SQYYQEQEQAQAVVTTTTPSTQAQQGQPAQASPSS. Over residues 577–601 the composition is skewed to basic and acidic residues; the sequence is SERKRKEPREKDKEKEKEKNSCVIL.

Belongs to the MINDY deubiquitinase family. FAM63 subfamily.

The catalysed reaction is Thiol-dependent hydrolysis of ester, thioester, amide, peptide and isopeptide bonds formed by the C-terminal Gly of ubiquitin (a 76-residue protein attached to proteins as an intracellular targeting signal).. Its function is as follows. Hydrolase that can remove 'Lys-48'-linked conjugated ubiquitin from proteins. Can also bind to polyubiquitin chains of different linkage types, including 'Lys-6', 'Lys-11', 'Lys-29', 'Lys-33' and 'Lys-63'. May play a regulatory role at the level of protein turnover. The protein is Ubiquitin carboxyl-terminal hydrolase MINDY-2 (Mindy2) of Mus musculus (Mouse).